The sequence spans 172 residues: Small ribosomal subunit protein uS5 (172 aa).

The 64-residue stretch at 13-76 folds into the S5 DRBM domain; the sequence is LVEKMISVNR…EQARHNMMKI (64 aa).

Belongs to the universal ribosomal protein uS5 family. Part of the 30S ribosomal subunit. Contacts proteins S4 and S8.

Its function is as follows. With S4 and S12 plays an important role in translational accuracy. Functionally, located at the back of the 30S subunit body where it stabilizes the conformation of the head with respect to the body. This Chromobacterium violaceum (strain ATCC 12472 / DSM 30191 / JCM 1249 / CCUG 213 / NBRC 12614 / NCIMB 9131 / NCTC 9757 / MK) protein is Small ribosomal subunit protein uS5.